Consider the following 134-residue polypeptide: Nogalonic acid methyl ester cyclase (134 aa).

Gln95 contacts nogalaviketone. Residue Asp111 is the Proton donor/acceptor of the active site.

It belongs to the polyketide cyclase DnrD family. As to quaternary structure, homotetramer. Dimer of dimers.

The catalysed reaction is nogalaviketone = methyl nogalonate. It participates in antibiotic biosynthesis. In terms of biological role, involved in the biosynthesis of the aromatic polyketide antibiotic nogalamycin. Catalyzes the formation of nogalaviketone from nogalonic acid methyl ester (NAME), the last ring-closure step in the biosynthesis of nogalamycin. The chain is Nogalonic acid methyl ester cyclase from Streptomyces nogalater.